A 205-amino-acid polypeptide reads, in one-letter code: Regulator of G-protein signaling 4 (205 aa).

3 S-palmitoyl cysteine lipidation sites follow: Cys2, Cys12, and Cys95. The RGS domain maps to 62–178; it reads SLENLISHEC…LKSRFYLDLV (117 aa).

In terms of processing, palmitoylated on Cys-2 and/or Cys-12. Post-translationally, phosphorylated by cyclic GMP-dependent protein kinase.

In terms of biological role, inhibits signal transduction by increasing the GTPase activity of G protein alpha subunits thereby driving them into their inactive GDP-bound form. Activity on G(z)-alpha is inhibited by phosphorylation of the G-protein. Activity on G(z)-alpha and G(i)-alpha-1 is inhibited by palmitoylation of the G-protein. The chain is Regulator of G-protein signaling 4 (RGS4) from Pongo abelii (Sumatran orangutan).